A 94-amino-acid polypeptide reads, in one-letter code: Small ribosomal subunit protein bS18 (94 aa).

The protein belongs to the bacterial ribosomal protein bS18 family. As to quaternary structure, part of the 30S ribosomal subunit. Forms a tight heterodimer with protein bS6.

Binds as a heterodimer with protein bS6 to the central domain of the 16S rRNA, where it helps stabilize the platform of the 30S subunit. The protein is Small ribosomal subunit protein bS18 of Rickettsia bellii (strain OSU 85-389).